The chain runs to 605 residues: Sulfite reductase [NADPH] flavoprotein alpha-component (605 aa).

The 139-residue stretch at 70 to 208 (LTIIYASQTG…PAAEWRVKAL (139 aa)) folds into the Flavodoxin-like domain. FMN contacts are provided by residues 76–81 (SQTGNA), 123–126 (STHG), and 159–168 (LGDSSYEFFC). The FAD-binding FR-type domain maps to 240–454 (QNPYEATLLT…VEENNNFKLP (215 aa)). FAD contacts are provided by residues Thr-328, Gly-362, 392-395 (RLYS), 410-412 (TVG), and 425-428 (GGAS). NADP(+) contacts are provided by residues 525-526 (SR), 531-535 (KVYVQ), and Asp-567. An FAD-binding site is contributed by Tyr-605.

This sequence belongs to the NADPH-dependent sulphite reductase flavoprotein subunit CysJ family. In the N-terminal section; belongs to the flavodoxin family. The protein in the C-terminal section; belongs to the flavoprotein pyridine nucleotide cytochrome reductase family. Alpha(8)-beta(8). The alpha component is a flavoprotein, the beta component is a hemoprotein. Requires FAD as cofactor. FMN serves as cofactor.

It catalyses the reaction hydrogen sulfide + 3 NADP(+) + 3 H2O = sulfite + 3 NADPH + 4 H(+). It participates in sulfur metabolism; hydrogen sulfide biosynthesis; hydrogen sulfide from sulfite (NADPH route): step 1/1. Its function is as follows. Component of the sulfite reductase complex that catalyzes the 6-electron reduction of sulfite to sulfide. This is one of several activities required for the biosynthesis of L-cysteine from sulfate. The flavoprotein component catalyzes the electron flow from NADPH -&gt; FAD -&gt; FMN to the hemoprotein component. The chain is Sulfite reductase [NADPH] flavoprotein alpha-component from Photobacterium profundum (strain SS9).